The sequence spans 566 residues: Arginine--tRNA ligase (566 aa).

Positions 121 to 131 (ANPNGPFHIGH) match the 'HIGH' region motif.

This sequence belongs to the class-I aminoacyl-tRNA synthetase family.

The protein localises to the cytoplasm. The catalysed reaction is tRNA(Arg) + L-arginine + ATP = L-arginyl-tRNA(Arg) + AMP + diphosphate. This chain is Arginine--tRNA ligase, found in Methanococcus maripaludis (strain C6 / ATCC BAA-1332).